A 163-amino-acid chain; its full sequence is Epithelial membrane protein 3 (163 aa).

A helical transmembrane segment spans residues 4–24; sequence LLLVVSALHILILVLLFVATL. 2 N-linked (GlcNAc...) asparagine glycosylation sites follow: N46 and N56. Transmembrane regions (helical) follow at residues 66–86, 100–120, and 139–159; these read VQAL…LFMF, TGLC…IYAI, and FALA…YIHL.

The protein belongs to the PMP-22/EMP/MP20 family.

It localises to the membrane. Probably involved in cell proliferation and cell-cell interactions. This Mus musculus (Mouse) protein is Epithelial membrane protein 3 (Emp3).